We begin with the raw amino-acid sequence, 153 residues long: Small ribosomal subunit protein uS13 (153 aa).

It belongs to the universal ribosomal protein uS13 family. In terms of assembly, part of the 30S ribosomal subunit. Forms a loose heterodimer with protein S19. Forms two bridges to the 50S subunit in the 70S ribosome.

In terms of biological role, located at the top of the head of the 30S subunit, it contacts several helices of the 16S rRNA. In the 70S ribosome it contacts the 23S rRNA (bridge B1a) and protein L5 of the 50S subunit (bridge B1b), connecting the 2 subunits; these bridges are implicated in subunit movement. This is Small ribosomal subunit protein uS13 from Pyrobaculum calidifontis (strain DSM 21063 / JCM 11548 / VA1).